The following is a 122-amino-acid chain: LOB domain-containing protein 5 (122 aa).

One can recognise an LOB domain in the interval 8–109 (RPCSVCITKN…AYLRELQEKI (102 aa)).

This sequence belongs to the LOB domain-containing protein family.

In Arabidopsis thaliana (Mouse-ear cress), this protein is LOB domain-containing protein 5 (LBD5).